Consider the following 444-residue polypeptide: Argininosuccinate synthase (444 aa).

Residues 17-25 (AFSGGLDTS) and alanine 43 contribute to the ATP site. Tyrosine 99 is a binding site for L-citrulline. The ATP site is built by glycine 129 and threonine 131. Positions 131, 135, and 136 each coordinate L-aspartate. Asparagine 135 contacts L-citrulline. Aspartate 136 is an ATP binding site. Residues arginine 139 and serine 192 each contribute to the L-citrulline site. Aspartate 194 lines the ATP pocket. L-citrulline contacts are provided by threonine 201, glutamate 203, and glutamate 280.

Belongs to the argininosuccinate synthase family. Type 2 subfamily. As to quaternary structure, homotetramer.

Its subcellular location is the cytoplasm. The enzyme catalyses L-citrulline + L-aspartate + ATP = 2-(N(omega)-L-arginino)succinate + AMP + diphosphate + H(+). It functions in the pathway amino-acid biosynthesis; L-arginine biosynthesis; L-arginine from L-ornithine and carbamoyl phosphate: step 2/3. The chain is Argininosuccinate synthase from Paraburkholderia phymatum (strain DSM 17167 / CIP 108236 / LMG 21445 / STM815) (Burkholderia phymatum).